A 318-amino-acid chain; its full sequence is MNQDTQSANTQQEKKIAYNFNKLQKRLRRNVGNAIADFNMIEDGDKVMVCLSGGKDSYTLLDILLNLKLSAPIHFDIVAVNLDQKQPGFPEHILPEYLESIGVEYKIVEENTYGIVKEKIPEGKTTCSLCSRLRRGILYRTATELGATKIALGHHRDDMLETLFLNMFYGGKLKSMPPKLISDDGKQIVIRPLAYCKEKDIEKYSQAKQFPIIPCNLCGSQPNLQRQVVKEMLQTWDRQYPGRIETMFSAMQNITLSHLCDPSLFDFKGLKLGQVLDGVEGDIAFDKAEIPNQPLIQDEDEQTTDYGENGMIQFKQVQ.

The PP-loop motif signature appears at 52 to 57; sequence SGGKDS. The [4Fe-4S] cluster site is built by Cys127, Cys130, and Cys218.

Belongs to the TtcA family. In terms of assembly, homodimer. Mg(2+) is required as a cofactor. The cofactor is [4Fe-4S] cluster.

It localises to the cytoplasm. The catalysed reaction is cytidine(32) in tRNA + S-sulfanyl-L-cysteinyl-[cysteine desulfurase] + AH2 + ATP = 2-thiocytidine(32) in tRNA + L-cysteinyl-[cysteine desulfurase] + A + AMP + diphosphate + H(+). It participates in tRNA modification. Its function is as follows. Catalyzes the ATP-dependent 2-thiolation of cytidine in position 32 of tRNA, to form 2-thiocytidine (s(2)C32). The sulfur atoms are provided by the cysteine/cysteine desulfurase (IscS) system. This chain is tRNA-cytidine(32) 2-sulfurtransferase, found in Actinobacillus pleuropneumoniae serotype 3 (strain JL03).